A 344-amino-acid polypeptide reads, in one-letter code: L-threonine 3-dehydrogenase (344 aa).

Cysteine 42 contributes to the Zn(2+) binding site. Catalysis depends on charge relay system residues threonine 44 and histidine 47. Zn(2+) contacts are provided by histidine 67, glutamate 68, cysteine 97, cysteine 100, cysteine 103, and cysteine 111. Residues isoleucine 179, aspartate 199, arginine 204, leucine 266 to isoleucine 268, and isoleucine 290 to tyrosine 291 contribute to the NAD(+) site.

The protein belongs to the zinc-containing alcohol dehydrogenase family. In terms of assembly, homotetramer. It depends on Zn(2+) as a cofactor.

The protein resides in the cytoplasm. It carries out the reaction L-threonine + NAD(+) = (2S)-2-amino-3-oxobutanoate + NADH + H(+). Its pathway is amino-acid degradation; L-threonine degradation via oxydo-reductase pathway; glycine from L-threonine: step 1/2. In terms of biological role, catalyzes the NAD(+)-dependent oxidation of L-threonine to 2-amino-3-ketobutyrate. This chain is L-threonine 3-dehydrogenase, found in Mesorhizobium japonicum (strain LMG 29417 / CECT 9101 / MAFF 303099) (Mesorhizobium loti (strain MAFF 303099)).